A 265-amino-acid chain; its full sequence is Short-chain dehydrogenase/reductase fsr5 (265 aa).

The signal sequence occupies residues 1–32 (MASLGKYVSKLAGSRVLVIGGSSGIGFGVAEA). Positions 22, 23, 25, 45, and 50 each coordinate NADP(+). An N-linked (GlcNAc...) asparagine glycan is attached at asparagine 62. 3 residues coordinate NADP(+): asparagine 88, arginine 130, and threonine 204. Residues asparagine 218 and asparagine 250 are each glycosylated (N-linked (GlcNAc...) asparagine).

It belongs to the short-chain dehydrogenases/reductases (SDR) family.

Its function is as follows. Short-chain dehydrogenase/reductase; part of the gene cluster that mediates the biosynthesis of fusarubins, highly pigmented naphthoquinones responsible for the coloration of the fruiting bodies. The non-reducing polyketide synthase FSR1 is responsible for the condensation of seven acetyl-CoA units to yield a haptaketide. After rings A and B are formed by aldol-type cyclization, the PKS-derived product is released as 6-O-demethylfusarubinaldehyde. Then, two hydroxyl groups at C-5 and C-10 are incorporated by FSR3, and simultaneously hydroxyl groups at C-6 and C-8 are methylated by FSR2. The aldehyde is, on the one hand, reduced by FSR3 to 8-O-methylfusarubin alcohol, which equilibrates mainly with 8-O-methylfusarubin and only small amounts of 8-O-methylnectriafurone. On the other hand, the aldehyde can be oxidized to form 8-O-methylfusarubinic acid, a reaction driven by FSR3 equilibrating with 8-O-methylfusarubinlactone, finally resulting in 8-O-methylanhydrofusarubinlactol after a further reduction step and loss of water. 8-O-Methylfusarubinic acid can also undergo decarboxylation, resulting in 8-O-methyl-13-hydroxynorjavanicin after another hydroxylation step at C-13. Both steps are most likely also accomplished by FSR3. No enzymatic function has been determined so far for either FSR4 and FSR5. Their deletion does not alter the product spectrum, but the possibility that they catalyze specific enzymatic steps during perithecium development cannot be ruled out. FSR4 might possess a regulatory function in the biosynthesis of fusarubins. This Gibberella fujikuroi (strain CBS 195.34 / IMI 58289 / NRRL A-6831) (Bakanae and foot rot disease fungus) protein is Short-chain dehydrogenase/reductase fsr5.